Reading from the N-terminus, the 331-residue chain is Vitamin B12 import system permease protein BtuC (331 aa).

The next 9 membrane-spanning stretches (helical) occupy residues 20–42, 62–84, 91–113, 118–140, 147–169, 189–208, 240–262, 277–299, and 306–325; these read IMSVVLVLLSTIHLMVGEVFLSP, LVAAAMIGAALAVSGATLQVLLG, GVLGISGGASLAMVLVMFALPVL, IFMLAAIAGSMLFTLILVGIARA, RLLLVGVALGILSSAIVTWAFYF, ASWYQHTVTLVMLPVLVWLC, LAISVLVGCSVALGGIISFVGLV, YLLPLSAIFGAALLVFADIGARL, and LPLGVMTTSIGAPIFIWMLV.

The protein belongs to the binding-protein-dependent transport system permease family. FecCD subfamily. In terms of assembly, the complex is composed of two ATP-binding proteins (BtuD), two transmembrane proteins (BtuC) and a solute-binding protein (BtuF).

It localises to the cell inner membrane. Functionally, part of the ABC transporter complex BtuCDF involved in vitamin B12 import. Involved in the translocation of the substrate across the membrane. This is Vitamin B12 import system permease protein BtuC from Vibrio parahaemolyticus serotype O3:K6 (strain RIMD 2210633).